The chain runs to 231 residues: Endonuclease NucS (231 aa).

It belongs to the NucS endonuclease family.

Its subcellular location is the cytoplasm. In terms of biological role, cleaves both 3' and 5' ssDNA extremities of branched DNA structures. This chain is Endonuclease NucS, found in Beutenbergia cavernae (strain ATCC BAA-8 / DSM 12333 / CCUG 43141 / JCM 11478 / NBRC 16432 / NCIMB 13614 / HKI 0122).